A 344-amino-acid chain; its full sequence is GTP 3',8-cyclase (344 aa).

The Radical SAM core domain maps to 19 to 244 (PFARPITYLR…TPLAERTGGP (226 aa)). R28 is a GTP binding site. 2 residues coordinate [4Fe-4S] cluster: C35 and C39. Residue Y41 coordinates S-adenosyl-L-methionine. C42 contacts [4Fe-4S] cluster. Position 77 (R77) interacts with GTP. G81 is an S-adenosyl-L-methionine binding site. T110 provides a ligand contact to GTP. S134 contacts S-adenosyl-L-methionine. K170 lines the GTP pocket. M204 serves as a coordination point for S-adenosyl-L-methionine. C268 and C271 together coordinate [4Fe-4S] cluster. GTP is bound at residue 273-275 (RVR). C285 provides a ligand contact to [4Fe-4S] cluster.

Belongs to the radical SAM superfamily. MoaA family. In terms of assembly, monomer and homodimer. The cofactor is [4Fe-4S] cluster.

It catalyses the reaction GTP + AH2 + S-adenosyl-L-methionine = (8S)-3',8-cyclo-7,8-dihydroguanosine 5'-triphosphate + 5'-deoxyadenosine + L-methionine + A + H(+). It functions in the pathway cofactor biosynthesis; molybdopterin biosynthesis. Its function is as follows. Catalyzes the cyclization of GTP to (8S)-3',8-cyclo-7,8-dihydroguanosine 5'-triphosphate. In Paracoccus denitrificans (strain Pd 1222), this protein is GTP 3',8-cyclase.